A 368-amino-acid chain; its full sequence is Alanine racemase (368 aa).

Residue Lys35 is the Proton acceptor; specific for D-alanine of the active site. Position 35 is an N6-(pyridoxal phosphate)lysine (Lys35). Arg130 contacts substrate. Residue Tyr253 is the Proton acceptor; specific for L-alanine of the active site. Met305 provides a ligand contact to substrate.

This sequence belongs to the alanine racemase family. The cofactor is pyridoxal 5'-phosphate.

The enzyme catalyses L-alanine = D-alanine. It participates in amino-acid biosynthesis; D-alanine biosynthesis; D-alanine from L-alanine: step 1/1. Functionally, catalyzes the interconversion of L-alanine and D-alanine. May also act on other amino acids. This Cupriavidus metallidurans (strain ATCC 43123 / DSM 2839 / NBRC 102507 / CH34) (Ralstonia metallidurans) protein is Alanine racemase (alr).